A 431-amino-acid chain; its full sequence is Tol-Pal system protein TolB (431 aa).

A signal peptide spans 1–26 (MRLMTKLGFRALVASCLIAAGGAANA). A disordered region spans residues 411-431 (PQILSVQGGSVREPSWGPFMQ).

Belongs to the TolB family. The Tol-Pal system is composed of five core proteins: the inner membrane proteins TolA, TolQ and TolR, the periplasmic protein TolB and the outer membrane protein Pal. They form a network linking the inner and outer membranes and the peptidoglycan layer.

The protein resides in the periplasm. Its function is as follows. Part of the Tol-Pal system, which plays a role in outer membrane invagination during cell division and is important for maintaining outer membrane integrity. This is Tol-Pal system protein TolB from Burkholderia ambifaria (strain MC40-6).